The following is a 75-amino-acid chain: Sec-independent protein translocase protein TatA (75 aa).

A helical membrane pass occupies residues 1–21; it reads MGGISIWQLLIIVAIIVLLFG. The disordered stretch occupies residues 50-75; sequence DAEFKSLNKDESATAGSEKVKDKEQA.

The protein belongs to the TatA/E family. The Tat system comprises two distinct complexes: a TatABC complex, containing multiple copies of TatA, TatB and TatC subunits, and a separate TatA complex, containing only TatA subunits. Substrates initially bind to the TatABC complex, which probably triggers association of the separate TatA complex to form the active translocon.

The protein localises to the cell inner membrane. Its function is as follows. Part of the twin-arginine translocation (Tat) system that transports large folded proteins containing a characteristic twin-arginine motif in their signal peptide across membranes. TatA could form the protein-conducting channel of the Tat system. The chain is Sec-independent protein translocase protein TatA from Mannheimia succiniciproducens (strain KCTC 0769BP / MBEL55E).